A 444-amino-acid polypeptide reads, in one-letter code: Ribosomal protein uS12 methylthiotransferase RimO (444 aa).

Residues 2–118 (LKIALESLGC…IDKILKELSE (117 aa)) enclose the MTTase N-terminal domain. [4Fe-4S] cluster contacts are provided by cysteine 11, cysteine 47, cysteine 81, cysteine 155, cysteine 159, and cysteine 162. Residues 141-371 (STPSYMAYLK…MMIQQKISEE (231 aa)) form the Radical SAM core domain. Residues 374–441 (DKKIGKTYEV…EYDLMGDVLY (68 aa)) enclose the TRAM domain.

It belongs to the methylthiotransferase family. RimO subfamily. [4Fe-4S] cluster is required as a cofactor.

It localises to the cytoplasm. The catalysed reaction is L-aspartate(89)-[ribosomal protein uS12]-hydrogen + (sulfur carrier)-SH + AH2 + 2 S-adenosyl-L-methionine = 3-methylsulfanyl-L-aspartate(89)-[ribosomal protein uS12]-hydrogen + (sulfur carrier)-H + 5'-deoxyadenosine + L-methionine + A + S-adenosyl-L-homocysteine + 2 H(+). Its function is as follows. Catalyzes the methylthiolation of an aspartic acid residue of ribosomal protein uS12. The chain is Ribosomal protein uS12 methylthiotransferase RimO from Clostridioides difficile (strain 630) (Peptoclostridium difficile).